A 117-amino-acid polypeptide reads, in one-letter code: Acidic phospholipase A2 PA-1G (117 aa).

7 cysteine pairs are disulfide-bonded: cysteine 11-cysteine 71, cysteine 27-cysteine 117, cysteine 29-cysteine 45, cysteine 44-cysteine 98, cysteine 51-cysteine 91, cysteine 60-cysteine 84, and cysteine 78-cysteine 89. Ca(2+) is bound by residues tyrosine 28, glycine 30, and glycine 32. Residue histidine 48 is part of the active site. Aspartate 49 is a binding site for Ca(2+). Aspartate 92 is a catalytic residue.

It belongs to the phospholipase A2 family. Group I subfamily. D49 sub-subfamily. It depends on Ca(2+) as a cofactor. Expressed by the venom gland.

It is found in the secreted. The catalysed reaction is a 1,2-diacyl-sn-glycero-3-phosphocholine + H2O = a 1-acyl-sn-glycero-3-phosphocholine + a fatty acid + H(+). PLA2 catalyzes the calcium-dependent hydrolysis of the 2-acyl groups in 3-sn-phosphoglycerides. In Pseudechis australis (Mulga snake), this protein is Acidic phospholipase A2 PA-1G.